The following is a 313-amino-acid chain: Ribosomal RNA small subunit methyltransferase H (313 aa).

S-adenosyl-L-methionine is bound by residues 35–37 (GGH), Asp-55, Phe-79, Asp-101, and Gln-108.

Belongs to the methyltransferase superfamily. RsmH family.

Its subcellular location is the cytoplasm. The enzyme catalyses cytidine(1402) in 16S rRNA + S-adenosyl-L-methionine = N(4)-methylcytidine(1402) in 16S rRNA + S-adenosyl-L-homocysteine + H(+). Functionally, specifically methylates the N4 position of cytidine in position 1402 (C1402) of 16S rRNA. This Salmonella paratyphi A (strain ATCC 9150 / SARB42) protein is Ribosomal RNA small subunit methyltransferase H.